The sequence spans 804 residues: Protein translocase subunit SecA (804 aa).

ATP-binding positions include Q100, G118–T122, and D508.

It belongs to the SecA family. Monomer and homodimer. Part of the essential Sec protein translocation apparatus which comprises SecA, SecYEG and auxiliary proteins SecDF. Other proteins may also be involved.

The protein localises to the cell membrane. It is found in the cytoplasm. It catalyses the reaction ATP + H2O + cellular proteinSide 1 = ADP + phosphate + cellular proteinSide 2.. Its function is as follows. Part of the Sec protein translocase complex. Interacts with the SecYEG preprotein conducting channel. Has a central role in coupling the hydrolysis of ATP to the transfer of proteins into and across the cell membrane, serving as an ATP-driven molecular motor driving the stepwise translocation of polypeptide chains across the membrane. This Leuconostoc citreum (strain KM20) protein is Protein translocase subunit SecA.